We begin with the raw amino-acid sequence, 300 residues long: Urease accessory protein UreD (300 aa).

Belongs to the UreD family. As to quaternary structure, ureD, UreF and UreG form a complex that acts as a GTP-hydrolysis-dependent molecular chaperone, activating the urease apoprotein by helping to assemble the nickel containing metallocenter of UreC. The UreE protein probably delivers the nickel.

It localises to the cytoplasm. In terms of biological role, required for maturation of urease via the functional incorporation of the urease nickel metallocenter. This is Urease accessory protein UreD from Prochlorococcus marinus (strain MIT 9312).